A 95-amino-acid polypeptide reads, in one-letter code: MPKLAVVLLVLLILPLSYFDAAGGQAAEGDRRGNGLARYLQRGGRDNEAECQINTPGSSWGKCCLTRMCGPMCCARSGCTCVYHWRRGHGCSCPG.

Positions 1–24 are cleaved as a signal peptide; it reads MPKLAVVLLVLLILPLSYFDAAGG. Residues 25–45 constitute a propeptide that is removed on maturation; sequence QAAEGDRRGNGLARYLQRGGR. Glu-50 carries the post-translational modification 4-carboxyglutamate. 4-hydroxyproline is present on Pro-56. 4 disulfide bridges follow: Cys-64–Cys-73, Cys-69–Cys-81, Cys-74–Cys-91, and Cys-79–Cys-93.

Belongs to the conotoxin D superfamily. In terms of assembly, hetero-, homo- or pseudo-homodimer (identical sequence, different post-translational modifications). Heterodimer of [carboxy'Glu-49', hydroxy'Pro-55']Ms20.3 and [carboxyGlu-50, hydroxyPro-56]Ms20.5 may exist. As to expression, expressed by the venom duct.

The protein resides in the secreted. In terms of biological role, alpha-conotoxins act on postsynaptic membranes, they bind to the nicotinic acetylcholine receptors (nAChR) and thus inhibit them. Through its two C-terminal domains, this homodimeric protein would bind to two nAChR allosteric sites, located outside the nAChR C-loop of the principal binding face and at the adjacent binding interface in a clockwise direction. This toxin specifically blocks mammalian neuronal nAChR of the alpha-7/CHRNA7, alpha-3-beta-2/CHRNA3-CHRNB2 and alpha-4-beta-2/CHRNA4-CHRNB2 subtypes. This chain is Alpha-conotoxin-like Ms20.5, found in Conus mustelinus (Weasel cone).